The sequence spans 81 residues: Putative CNGA1-overlapping antisense gene protein (81 aa).

As to expression, expressed in brain, notably in regions involved in long-term potentiation and long-term depression, such as hippocampal CA1 and CA3, dentate gyrus and cerebellar Purkinje layer.

The sequence is that of Putative CNGA1-overlapping antisense gene protein from Homo sapiens (Human).